Consider the following 413-residue polypeptide: NADPH dehydrogenase afvA (413 aa).

Residue 53 to 56 (APLC) participates in FMN binding. A substrate-binding site is contributed by Tyr58. Residues Ala88 and Gln130 each contribute to the FMN site. 211–214 (HAAH) lines the substrate pocket. Residues Arg264 and 370–371 (GR) contribute to the FMN site.

This sequence belongs to the NADH:flavin oxidoreductase/NADH oxidase family. NamA subfamily. The cofactor is FMN.

It catalyses the reaction A + NADPH + H(+) = AH2 + NADP(+). It functions in the pathway secondary metabolite biosynthesis. Functionally, NADPH dehydrogenase; part of the gene cluster that mediates the biosynthesis of aflavarin, a bicoumarin that exhibits anti-insectan activity against the fungivorous beetle C.hemipterus. The sequence is that of NADPH dehydrogenase afvA from Aspergillus flavus (strain ATCC 200026 / FGSC A1120 / IAM 13836 / NRRL 3357 / JCM 12722 / SRRC 167).